The chain runs to 506 residues: Histone acetyltransferase esa-1 (506 aa).

Positions 1 to 24 (MSPPGGDATVGSDEKRQKGKATPD) are disordered. Positions 26-78 (IKMGCIAMVMKEGQLRRAEILSIKDTKSGRQFYCNFDNFNKRLDEWVPAARID) constitute a Tudor-knot domain. A disordered region spans residues 82 to 215 (DVEWPNPDKD…LRTSGSMTQN (134 aa)). The span at 87-98 (NPDKDKQKDAKT) shows a compositional bias: basic and acidic residues. Basic residues predominate over residues 109–120 (QPSKKNNQKKAS). Positions 167–178 (GGDKGVKRKADE) are enriched in basic and acidic residues. An MYST-type HAT domain is found at 220–494 (SRIRNISKVE…IDPERIQWKP (275 aa)). The segment at 253–278 (IYICEFCLSYYGELKSFVRHRQKCTL) adopts a C2HC MYST-type zinc-finger fold. The ESA1-RPD3 motif motif lies at 303–324 (RTWCRNLCLLSKMFLDHKTLYY). Residue Lys-320 is modified to N6-acetyllysine; by autocatalysis. Acetyl-CoA contacts are provided by residues 361–365 (ACILT) and 370–376 (QRKGYGR). Glu-396 (proton donor/acceptor) is an active-site residue. Residue Ser-400 coordinates acetyl-CoA.

The protein belongs to the MYST (SAS/MOZ) family. As to quaternary structure, component of the NuA4 histone acetyltransferase complex. Post-translationally, autoacetylation at Lys-320 is required for proper function.

The protein localises to the nucleus. It is found in the chromosome. It catalyses the reaction L-lysyl-[histone] + acetyl-CoA = N(6)-acetyl-L-lysyl-[histone] + CoA + H(+). The enzyme catalyses L-lysyl-[protein] + acetyl-CoA = N(6)-acetyl-L-lysyl-[protein] + CoA + H(+). The catalysed reaction is 2-hydroxyisobutanoyl-CoA + L-lysyl-[protein] = N(6)-(2-hydroxyisobutanoyl)-L-lysyl-[protein] + CoA + H(+). It carries out the reaction (2E)-butenoyl-CoA + L-lysyl-[protein] = N(6)-(2E)-butenoyl-L-lysyl-[protein] + CoA + H(+). Its function is as follows. Catalytic component of the NuA4 histone acetyltransferase (HAT) complex which is involved in epigenetic transcriptional activation of selected genes principally by acetylation of nucleosomal histones H4, H3, H2B, H2A and H2A variant H2A.Z. Acetylates histone H4 to form H4K5ac, H4K8ac, H4K12ac and H4K16ac, histone H3 to form H3K14ac, and histone H2A to form H2AK4ac and H2AK7ac. The NuA4 complex is involved in the DNA damage response and is required for chromosome segregation. The NuA4 complex plays a direct role in repair of DNA double-strand breaks (DSBs) through homologous recombination. Recruitment to promoters depends on H3K4me. Also acetylates non-histone proteins. In addition to protein acetyltransferase, can use different acyl-CoA substrates, such as 2-hydroxyisobutanoyl-CoA (2-hydroxyisobutyryl-CoA) or (2E)-butenoyl-CoA (crotonyl-CoA), and is able to mediate protein 2-hydroxyisobutyrylation and crotonylation, respectively. This Neurospora crassa (strain ATCC 24698 / 74-OR23-1A / CBS 708.71 / DSM 1257 / FGSC 987) protein is Histone acetyltransferase esa-1 (esa-1).